Consider the following 379-residue polypeptide: Cystathionine gamma-lyase (379 aa).

Lysine 195 carries the post-translational modification N6-(pyridoxal phosphate)lysine.

Belongs to the trans-sulfuration enzymes family. Pyridoxal 5'-phosphate serves as cofactor.

The catalysed reaction is L,L-cystathionine + H2O = 2-oxobutanoate + L-cysteine + NH4(+). It catalyses the reaction L-homocysteine + H2O = 2-oxobutanoate + hydrogen sulfide + NH4(+) + H(+). Catalyzes the conversion of cystathionine to cysteine, and homocysteine to sulfide. The chain is Cystathionine gamma-lyase (mccB) from Bacillus subtilis (strain 168).